Here is a 103-residue protein sequence, read N- to C-terminus: Histone H4 (103 aa).

The span at 1–14 shows a compositional bias: gly residues; the sequence is MSGRGKGGKGLGKG. Residues 1 to 20 form a disordered region; it reads MSGRGKGGKGLGKGGAKRHR. N-acetylserine is present on serine 2. Serine 2 carries the post-translational modification Phosphoserine. Position 4 is an asymmetric dimethylarginine; by PRMT1; alternate (arginine 4). A Citrulline; alternate modification is found at arginine 4. An Omega-N-methylarginine; by PRMT1; alternate modification is found at arginine 4. Position 4 is a symmetric dimethylarginine; by PRMT5 and PRMT7; alternate (arginine 4). 4 positions are modified to N6-(2-hydroxyisobutyryl)lysine; alternate: lysine 6, lysine 9, lysine 13, and lysine 17. Lysine 6 carries the post-translational modification N6-acetyl-N6-methyllysine; alternate. 4 positions are modified to N6-acetyllysine: lysine 6, lysine 9, lysine 13, and lysine 17. N6-butyryllysine; alternate is present on residues lysine 6, lysine 9, lysine 13, and lysine 17. Residue lysine 6 is modified to N6-glutaryllysine; alternate. 4 positions are modified to N6-lactoyllysine; alternate: lysine 6, lysine 9, lysine 13, and lysine 17. Lysine 9 carries the post-translational modification N6-propionyllysine; alternate. At lysine 13 the chain carries N6-acetyl-N6-methyllysine; alternate. Lysine 13 bears the N6-glutaryllysine; alternate mark. Lysine 13 bears the N6-methyllysine; alternate mark. Lysine 17 bears the N6-propionyllysine; alternate mark. A DNA-binding region spans residues 17–21; the sequence is KRHRK. At lysine 21 the chain carries N6-methyllysine; alternate. Lysine 21 is subject to N6,N6,N6-trimethyllysine; alternate. An N6,N6-dimethyllysine; alternate modification is found at lysine 21. At lysine 21 the chain carries N6-methylated lysine. An N6-(2-hydroxyisobutyryl)lysine; alternate mark is found at lysine 32 and lysine 45. N6-acetyllysine is present on lysine 32. Lysine 32 and lysine 45 each carry N6-butyryllysine; alternate. Lysine 32 carries the N6-glutaryllysine; alternate modification. Position 32 is an N6-lactoyllysine; alternate (lysine 32). Lysine 32 and lysine 45 each carry N6-propionyllysine; alternate. At lysine 32 the chain carries N6-succinyllysine; alternate. A Glycyl lysine isopeptide (Lys-Gly) (interchain with G-Cter in UFM1); alternate cross-link involves residue lysine 32. Phosphoserine; by PAK2 is present on serine 48. At tyrosine 52 the chain carries Phosphotyrosine. Residue lysine 60 is modified to N6-acetyllysine. An N6-glutaryllysine; alternate mark is found at lysine 60, lysine 78, and lysine 80. Lysine 60 bears the N6-(2-hydroxyisobutyryl)lysine mark. Lysine 78 and lysine 80 each carry N6-(2-hydroxyisobutyryl)lysine; alternate. Residues lysine 78 and lysine 80 each carry the N6-butyryllysine; alternate modification. Lysine 78 bears the N6-lactoyllysine; alternate mark. 2 positions are modified to N6-propionyllysine; alternate: lysine 78 and lysine 80. Lysine 78 is subject to N6-succinyllysine. The residue at position 80 (lysine 80) is an N6-acetyllysine. Tyrosine 89 carries the phosphotyrosine modification. Lysine 92 bears the N6-(2-hydroxyisobutyryl)lysine; alternate mark. Lysine 92 carries the N6-butyryllysine; alternate modification. Lysine 92 bears the N6-glutaryllysine; alternate mark. Lysine 92 is subject to N6-lactoyllysine; alternate. Lysine 92 is modified (N6-propionyllysine; alternate). An N6-succinyllysine; alternate modification is found at lysine 92. Lysine 92 carries the post-translational modification N6-acetyllysine; alternate. A Glycyl lysine isopeptide (Lys-Gly) (interchain with G-Cter in ubiquitin); alternate cross-link involves residue lysine 92.

The protein belongs to the histone H4 family. As to quaternary structure, the nucleosome is a histone octamer containing two molecules each of H2A, H2B, H3 and H4 assembled in one H3-H4 heterotetramer and two H2A-H2B heterodimers. The octamer wraps approximately 147 bp of DNA. Acetylation at Lys-6 (H4K5ac), Lys-9 (H4K8ac), Lys-13 (H4K12ac) and Lys-17 (H4K16ac) occurs in coding regions of the genome but not in heterochromatin. Post-translationally, citrullination at Arg-4 (H4R3ci) by PADI4 impairs methylation. In terms of processing, monomethylation and asymmetric dimethylation at Arg-4 (H4R3me1 and H4R3me2a, respectively) by PRMT1 favors acetylation at Lys-9 (H4K8ac) and Lys-13 (H4K12ac). Demethylation is performed by JMJD6. Symmetric dimethylation on Arg-4 (H4R3me2s) by the PRDM1/PRMT5 complex may play a crucial role in the germ-cell lineage. Monomethylated, dimethylated or trimethylated at Lys-21 (H4K20me1, H4K20me2, H4K20me3). Monomethylation is performed by KMT5A/SET8. Trimethylation is performed by KMT5B and KMT5C and induces gene silencing. Monomethylated at Lys-13 (H4K12me1) by N6AMT1; H4K12me1 modification is present at the promoters of numerous genes encoding cell cycle regulators. Post-translationally, acetyl-methylated at Lys-6 and Lys-13 (H4K5acme and H4K12acme, respectively), acetyl-methylation is an epigenetic mark of active chromatin associated with increased transcriptional initiation. Acetyl-methylation is formed by acetylation by EP300/p300 of lysine residues that are already monomethylated on the same side chain. H4K5acme and H4K12acme marks specifically bind BRD2. In terms of processing, phosphorylated by pak2 at Ser-48 (H4S47ph). This phosphorylation increases the association of H3.3-H4 with the histone chaperone HIRA, thus promoting nucleosome assembly of H3.3-H4 and inhibiting nucleosome assembly of H3.1-H4. Ubiquitinated by the CUL4-DDB-RBX1 complex in response to ultraviolet irradiation. This may weaken the interaction between histones and DNA and facilitate DNA accessibility to repair proteins. Monoubiquitinated at Lys-92 of histone H4 (H4K91ub1) in response to DNA damage. The exact role of H4K91ub1 in DNA damage response is still unclear but it may function as a licensing signal for additional histone H4 post-translational modifications such as H4 Lys-21 methylation (H4K20me). Post-translationally, sumoylated, which is associated with transcriptional repression. In terms of processing, butyrylation of histones marks active promoters and competes with histone acetylation. Glutarylation at Lys-92 (H4K91glu) destabilizes nucleosomes by promoting dissociation of the H2A-H2B dimers from nucleosomes. Post-translationally, ufmylated; monofmylated by UFL1 at Lys-32 (H4K31Ufm1) in response to DNA damage. In terms of processing, lactylated in macrophages by EP300/P300 by using lactoyl-CoA directly derived from endogenous or exogenous lactate, leading to stimulates gene transcription. Delactylated by SIRT3 at Lys-17 (H4K16la).

The protein localises to the nucleus. It localises to the chromosome. In terms of biological role, core component of nucleosome. Nucleosomes wrap and compact DNA into chromatin, limiting DNA accessibility to the cellular machineries which require DNA as a template. Histones thereby play a central role in transcription regulation, DNA repair, DNA replication and chromosomal stability. DNA accessibility is regulated via a complex set of post-translational modifications of histones, also called histone code, and nucleosome remodeling. The sequence is that of Histone H4 from Xenopus laevis (African clawed frog).